Here is a 427-residue protein sequence, read N- to C-terminus: A-kinase anchor protein 5 (427 aa).

Residues 1–122 (METTISEIHV…DADLSKKKAK (122 aa)) are disordered. The tract at residues 1-170 (METTISEIHV…LDIQTQTPLN (170 aa)) is essential to the intracellular anchoring function. Positions 8–19 (IHVENKDEKRSA) are enriched in basic and acidic residues. S22 is modified (phosphoserine). Residue C36 is the site of S-palmitoyl cysteine attachment. A compositionally biased stretch (basic residues) spans 37 to 48 (FKRRKKAAKALK). The short motif at 76–96 (RGAWASLKRLVTRRKRSESSK) is the AKAP CaM-binding element. Basic and acidic residues predominate over residues 92–102 (SESSKQQKPLE). The S-palmitoyl cysteine moiety is linked to residue C129. Composition is skewed to polar residues over residues 171–182 (DQATKAKSTQDL) and 242–252 (VQPQQASPLET). Disordered stretches follow at residues 171-205 (DQAT…STTS), 239-269 (KQDV…PPLP), and 281-333 (SNST…EESK). Over residues 302 to 333 (EETKPKDTELSQESDFKENGITEEKSKSEESK) the composition is skewed to basic and acidic residues. Residues 392–405 (LIETASSLVKNAIQ) are PKA-RII subunit binding domain. Positions 410 to 427 (QLVNEMASDDNKINNLLQ) are tethers NFATC2 to CRAC channels.

Binding protein for dimer of the RII-beta regulatory subunit of cAMP-dependent protein kinase (PKA) and also for the protein kinase C (PKC) and the phosphatase calcineurin (PP2B). Each enzyme is inhibited when bound to the anchoring protein. Also binds the beta2-adrenergic receptor. Part of a complex containing AKAP5, ADCY5, ADCY6 and PDE4C. Interacts with ADCY8, and enhances its phosphorylation at lipid rafts. Interacts with ORAI1 (isoform alpha) (via N-terminus) upon store depletion and in response to LTC4. Does not interact with ORAI2 and ORAI3 paralogs. Interacts (via leucine zipper domain) with NFATC2/NFAT1. Interacts with calmodulin; the interaction is calcium-independent. Interacts with KCNQ2; the interaction may help KCNQ2 channel complex to retain calcium-bound calmodulin. Interacts with KCNK2; the channel is recruited to postsynaptic microdomains by AKAP5 where it can integrate neurotransmitter receptor signals. Part of a complex composed of AKAP5 and ADRB2. In terms of processing, palmitoylated. Palmitoylation at Cys-36 and Cys-129 play a key role in the targeting of AKAP5 to lipid rafts. Palmitoylation by ZDHHC2 is required for AKAP5 function in LTP-stimulated recycling endosome exocytosis. As to expression, predominantly in the cerebral cortex and the postsynaptic densities of the forebrain, and to a lesser extent in adrenal medulla, lung and anterior pituitary.

Its subcellular location is the postsynaptic recycling endosome membrane. The protein resides in the cell projection. It is found in the dendrite. The protein localises to the postsynaptic cell membrane. Multivalent scaffold protein that anchors the cAMP-dependent protein kinase/PKA to cytoskeletal and/or organelle-associated proteins, targeting the signal carried by cAMP to specific intracellular effectors. Association with the beta2-adrenergic receptor (beta2-AR) not only regulates beta2-AR signaling pathway, but also the activation by PKA by switching off the beta2-AR signaling cascade. Plays a role in long term synaptic potentiation by regulating protein trafficking from the dendritic recycling endosomes to the plasma membrane and controlling both structural and functional plasticity at excitatory synapses. In hippocampal pyramidal neurons, recruits KCNK2/TREK-1 channel at postsynaptic dense bodies microdomains and converts it to a leak channel no longer sensitive to stimulation by arachidonic acid, acidic pH or mechanical stress, nor inhibited by Gq-coupled receptors but still under the negative control of Gs-coupled receptors. Associates with ORAI1 pore-forming subunit of CRAC channels in Ca(2+) signaling microdomains where it recruits NFATC2/NFAT1 and couples store-operated Ca(2+) influx to calmodulin and calcineurin signaling and activation of NFAT-dependent transcriptional responses. The polypeptide is A-kinase anchor protein 5 (AKAP5) (Homo sapiens (Human)).